Reading from the N-terminus, the 457-residue chain is ATP synthase subunit beta (457 aa).

147 to 154 (GGAGVGKT) lines the ATP pocket.

It belongs to the ATPase alpha/beta chains family. As to quaternary structure, F-type ATPases have 2 components, CF(1) - the catalytic core - and CF(0) - the membrane proton channel. CF(1) has five subunits: alpha(3), beta(3), gamma(1), delta(1), epsilon(1). CF(0) has three main subunits: a(1), b(2) and c(9-12). The alpha and beta chains form an alternating ring which encloses part of the gamma chain. CF(1) is attached to CF(0) by a central stalk formed by the gamma and epsilon chains, while a peripheral stalk is formed by the delta and b chains.

It localises to the cell inner membrane. It carries out the reaction ATP + H2O + 4 H(+)(in) = ADP + phosphate + 5 H(+)(out). Functionally, produces ATP from ADP in the presence of a proton gradient across the membrane. The catalytic sites are hosted primarily by the beta subunits. The chain is ATP synthase subunit beta from Histophilus somni (strain 2336) (Haemophilus somnus).